Here is a 254-residue protein sequence, read N- to C-terminus: 5-keto-D-gluconate 5-reductase (254 aa).

An NADP(+)-binding site is contributed by 13–37 (LITGSAQGIGFLLATGLGKYGAQII). S145 contacts substrate. Residue Y158 is the Proton acceptor of the active site.

This sequence belongs to the short-chain dehydrogenases/reductases (SDR) family.

The catalysed reaction is D-gluconate + NAD(+) = 5-dehydro-D-gluconate + NADH + H(+). The enzyme catalyses D-gluconate + NADP(+) = 5-dehydro-D-gluconate + NADPH + H(+). Its pathway is carbohydrate acid metabolism; L-idonate degradation. In terms of biological role, catalyzes the reduction of 5-keto-D-gluconate to D-gluconate, using either NADH or NADPH. Is likely involved in an L-idonate degradation pathway that allows E.coli to utilize L-idonate as the sole carbon and energy source. Is also able to catalyze the reverse reaction in vitro, but the D-gluconate oxidation by the enzyme can only proceed with NAD. The chain is 5-keto-D-gluconate 5-reductase from Escherichia coli O6:H1 (strain CFT073 / ATCC 700928 / UPEC).